The chain runs to 303 residues: 3-methyl-2-oxobutanoate hydroxymethyltransferase (303 aa).

Positions 1 to 10 (MDSSGTVRNQ) are enriched in polar residues. The interval 1-41 (MDSSGTVRNQTSDDHSRPADAAGTAATLYGAPAETRSPRRS) is disordered. The Mg(2+) site is built by Asp-84 and Asp-123. 3-methyl-2-oxobutanoate is bound by residues 84–85 (DS), Asp-123, and Lys-153. Glu-155 is a Mg(2+) binding site. The Proton acceptor role is filled by Glu-221.

It belongs to the PanB family. Homodecamer; pentamer of dimers. Mg(2+) is required as a cofactor.

It is found in the cytoplasm. It catalyses the reaction 3-methyl-2-oxobutanoate + (6R)-5,10-methylene-5,6,7,8-tetrahydrofolate + H2O = 2-dehydropantoate + (6S)-5,6,7,8-tetrahydrofolate. The protein operates within cofactor biosynthesis; (R)-pantothenate biosynthesis; (R)-pantoate from 3-methyl-2-oxobutanoate: step 1/2. Functionally, catalyzes the reversible reaction in which hydroxymethyl group from 5,10-methylenetetrahydrofolate is transferred onto alpha-ketoisovalerate to form ketopantoate. In Frankia alni (strain DSM 45986 / CECT 9034 / ACN14a), this protein is 3-methyl-2-oxobutanoate hydroxymethyltransferase.